The primary structure comprises 185 residues: Ribosome-recycling factor (185 aa).

This sequence belongs to the RRF family.

It is found in the cytoplasm. Responsible for the release of ribosomes from messenger RNA at the termination of protein biosynthesis. May increase the efficiency of translation by recycling ribosomes from one round of translation to another. In Parafrankia sp. (strain EAN1pec), this protein is Ribosome-recycling factor.